We begin with the raw amino-acid sequence, 215 residues long: dITP/XTP pyrophosphatase (215 aa).

13–18 contributes to the substrate binding site; that stretch reads THNIGK. The active-site Proton acceptor is Asp-74. Asp-74 serves as a coordination point for Mg(2+). Substrate is bound by residues Ser-75, 163–166, Lys-186, and 199–200; these read FGFD and HR.

The protein belongs to the HAM1 NTPase family. Homodimer. Mg(2+) is required as a cofactor.

The enzyme catalyses XTP + H2O = XMP + diphosphate + H(+). It carries out the reaction dITP + H2O = dIMP + diphosphate + H(+). The catalysed reaction is ITP + H2O = IMP + diphosphate + H(+). Pyrophosphatase that catalyzes the hydrolysis of nucleoside triphosphates to their monophosphate derivatives, with a high preference for the non-canonical purine nucleotides XTP (xanthosine triphosphate), dITP (deoxyinosine triphosphate) and ITP. Seems to function as a house-cleaning enzyme that removes non-canonical purine nucleotides from the nucleotide pool, thus preventing their incorporation into DNA/RNA and avoiding chromosomal lesions. This is dITP/XTP pyrophosphatase from Bartonella henselae (strain ATCC 49882 / DSM 28221 / CCUG 30454 / Houston 1) (Rochalimaea henselae).